The sequence spans 407 residues: Arrestin homolog (407 aa).

It belongs to the arrestin family.

The protein is Arrestin homolog of Locusta migratoria (Migratory locust).